Consider the following 594-residue polypeptide: Frizzled and smoothened-like protein A (594 aa).

The signal sequence occupies residues Met-1–Ser-22. Over Gln-23–Thr-248 the chain is Extracellular. One can recognise an FZ domain in the interval Asn-27–Ile-173. Disulfide bonds link Cys-32–Cys-98 and Cys-41–Cys-91. Residues Asn-55 and Asn-106 are each glycosylated (N-linked (GlcNAc...) asparagine). A disulfide bridge connects residues Cys-117 and Cys-170. Asn-182, Asn-189, Asn-195, and Asn-206 each carry an N-linked (GlcNAc...) asparagine glycan. The chain crosses the membrane as a helical span at residues Thr-249 to Leu-269. Residues Asn-270–Thr-277 lie on the Cytoplasmic side of the membrane. Residues Ile-278–Ala-298 traverse the membrane as a helical segment. Residues Ser-299 to Gln-329 lie on the Extracellular side of the membrane. A helical transmembrane segment spans residues Trp-330–Ile-350. Residues Lys-351 to Lys-361 are Cytoplasmic-facing. A helical transmembrane segment spans residues Tyr-362–Asp-382. The Extracellular segment spans residues Asp-383–Gly-403. Residues Cys-404 to Ile-424 traverse the membrane as a helical segment. Residues Tyr-425 to Leu-448 lie on the Cytoplasmic side of the membrane. A helical transmembrane segment spans residues Phe-449–Val-469. At Gln-470–Gln-507 the chain is on the extracellular side. A glycan (N-linked (GlcNAc...) asparagine) is linked at Asn-479. A helical transmembrane segment spans residues Phe-508–Asn-528. Topologically, residues Ser-529–Leu-594 are cytoplasmic.

The protein belongs to the G-protein coupled receptor Fz/Smo family.

It localises to the membrane. The sequence is that of Frizzled and smoothened-like protein A (fslA) from Dictyostelium discoideum (Social amoeba).